The primary structure comprises 154 residues: Photosystem II extrinsic protein U, chloroplastic (154 aa).

The N-terminal 36 residues, 1–36 (MAFISTPLGKVTVKSATVSANRRGLRMQSDSEPVVS), are a transit peptide targeting the chloroplast. A thylakoid-targeting transit peptide spans 37 to 61 (RRALLSGALAAAVAAALARARPAQA).

It belongs to the PsbU family. PSII is composed of 1 copy each of membrane proteins PsbA, PsbB, PsbC, PsbD, PsbE, PsbF, PsbH, PsbI, PsbJ, PsbK, PsbL, PsbM, PsbT, PsbY, PsbZ, Psb30/Ycf12, at least 3 peripheral proteins of the oxygen-evolving complex and a large number of cofactors. It forms dimeric complexes. The extrinsic subunits in red algae are PsbO (OEC33), PsbQ', cytochrome c-550 and PsbU. Predicted to be translocated into the thylakoid lumen by the Tat system. The position of the first transit peptide cleavage has not been experimentally proven.

It localises to the plastid. The protein localises to the chloroplast thylakoid membrane. One of the extrinsic, lumenal subunits of photosystem II (PSII). PSII is a light-driven water plastoquinone oxidoreductase, using light energy to abstract electrons from H(2)O, generating a proton gradient subsequently used for ATP formation. The extrinsic proteins stabilize the structure of photosystem II oxygen-evolving complex (OEC), the ion environment of oxygen evolution and protect the OEC against heat-induced inactivation. This Cyanidium caldarium (Red alga) protein is Photosystem II extrinsic protein U, chloroplastic.